A 138-amino-acid chain; its full sequence is Large ribosomal subunit protein uL16 (138 aa).

A compositionally biased stretch (basic residues) spans 1-13 (MLQPARRKYRKEQ). A disordered region spans residues 1-21 (MLQPARRKYRKEQKGRNTGIA).

The protein belongs to the universal ribosomal protein uL16 family. Part of the 50S ribosomal subunit.

In terms of biological role, binds 23S rRNA and is also seen to make contacts with the A and possibly P site tRNAs. This Albidiferax ferrireducens (strain ATCC BAA-621 / DSM 15236 / T118) (Rhodoferax ferrireducens) protein is Large ribosomal subunit protein uL16.